Here is a 706-residue protein sequence, read N- to C-terminus: Gamma-adducin (706 aa).

Low complexity predominate over residues 1-11; that stretch reads MSSDTSPAVVT. The interval 1-23 is disordered; that stretch reads MSSDTSPAVVTTPPPPSMPHKER. Ser2 is subject to N-acetylserine. Ser31, Ser42, Ser64, Ser402, Ser414, Ser423, Ser442, and Ser461 each carry phosphoserine. 4 disordered regions span residues 471 to 495, 534 to 556, 574 to 610, and 651 to 706; these read AEDSSKVSSGTPIKIEDPNQFVPLN, PPSTMQFDDDDQGPPAPPNPFSH, QGLDDAEQGSLSDDAASVSQIQSQTQSPQSVPERLEE, and TSTT…KVEA. A Glycyl lysine isopeptide (Lys-Gly) (interchain with G-Cter in SUMO2) cross-link involves residue Lys484. Ser583, Ser585, and Ser590 each carry phosphoserine. 2 stretches are compositionally biased toward low complexity: residues 590 to 605 and 651 to 662; these read SVSQIQSQTQSPQSVP and TSTTIENIEITI. Phosphoserine is present on residues Ser673, Ser677, Ser679, Ser681, and Ser683. A compositionally biased stretch (basic residues) spans 682–706; sequence PSKKKKKFRTPSFLKKNKKKEKVEA. Positions 684–701 are interaction with calmodulin; sequence KKKKKFRTPSFLKKNKKK.

The protein belongs to the aldolase class II family. Adducin subfamily. Heterodimer of an alpha and a gamma subunit. In terms of processing, sumoylated. Post-translationally, proteolytically cleaved by asparagine endopeptidase (AEP) into 2 fragments. Overexpression of the 1-357 fragment induces neuronal apoptosis, and overexpression of either 1-357 or 358-706 fragment increases the degeneration of dendritic spines. Overexpression of the 1-357 fragment impairs neurite outgrowth by downregulating the expression of Rac2, and induces synaptic dysfunction and cognitive impairments in tau P301S transgenic mice, a mouse model for Alzheimer disease (AD). As to expression, cleavage fragment 1-357 is expressed in the brain and the expression increases with age (at protein level). The fragment is expressed in the cortex, hippocampal CA1 region and hippocampal dentate gyrus in tau P301S transgenic mice, a mouse model for Alzheimer disease (AD) (at protein level). The fragment is only weakly expressed in non-transgenic mouse brain sections (at protein level).

It is found in the cytoplasm. The protein localises to the cytoskeleton. The protein resides in the cell membrane. Its function is as follows. Membrane-cytoskeleton-associated protein that promotes the assembly of the spectrin-actin network. Plays a role in actin filament capping. Binds to calmodulin. Involved in myogenic reactivity of the renal afferent arteriole (Af-art), renal interlobular arteries and middle cerebral artery (MCA) to increased perfusion pressure. Involved in regulation of potassium channels in the vascular smooth muscle cells (VSMCs) of the Af-art and MCA ex vivo. Involved in regulation of glomerular capillary pressure, glomerular filtration rate (GFR) and glomerular nephrin expression in response to hypertension. Involved in renal blood flow (RBF) autoregulation. Plays a role in podocyte structure and function. Regulates globular monomer actin (G-actin) and filamentous polymer actin (F-actin) ratios in the primary podocytes affecting actin cytoskeleton organization. Regulates expression of synaptopodin, RhoA, Rac1 and CDC42 in the renal cortex and the primary podocytes. Regulates expression of nephrin in the glomeruli and in the primary podocytes, expression of nephrin and podocinin in the renal cortex, and expression of focal adhesion proteins integrin alpha-3 and integrin beta-1 in the glomeruli. Involved in cell migration and cell adhesion of podocytes, and in podocyte foot process effacement. Regulates expression of profibrotics markers MMP2, MMP9, TGF beta-1, tubular tight junction protein E-cadherin, and mesenchymal markers vimentin and alpha-SMA. Promotes the growth of neurites. The chain is Gamma-adducin (Add3) from Mus musculus (Mouse).